Reading from the N-terminus, the 373-residue chain is Probable leucine aminopeptidase 1 (373 aa).

The signal sequence occupies residues 1–18 (MKLLSVLALSATATSVLG). 2 residues coordinate Zn(2+): histidine 176 and aspartate 195. Asparagine 196 carries N-linked (GlcNAc...) asparagine glycosylation. Positions 234 and 261 each coordinate Zn(2+). Asparagine 288 carries an N-linked (GlcNAc...) asparagine glycan. A disulfide bridge links cysteine 310 with cysteine 314. A Zn(2+)-binding site is contributed by histidine 343.

It belongs to the peptidase M28 family. M28E subfamily. As to quaternary structure, monomer. Zn(2+) serves as cofactor.

The protein resides in the secreted. Functionally, extracellular aminopeptidase which contributes to pathogenicity. The chain is Probable leucine aminopeptidase 1 (LAP1) from Trichophyton verrucosum (strain HKI 0517).